The chain runs to 366 residues: Chorismate synthase (366 aa).

Positions 48 and 54 each coordinate NADP(+). FMN contacts are provided by residues 125-127 (RSS), 238-239 (NA), Gly278, 293-297 (KPTSS), and Arg319.

Belongs to the chorismate synthase family. As to quaternary structure, homotetramer. The cofactor is FMNH2.

The enzyme catalyses 5-O-(1-carboxyvinyl)-3-phosphoshikimate = chorismate + phosphate. Its pathway is metabolic intermediate biosynthesis; chorismate biosynthesis; chorismate from D-erythrose 4-phosphate and phosphoenolpyruvate: step 7/7. Catalyzes the anti-1,4-elimination of the C-3 phosphate and the C-6 proR hydrogen from 5-enolpyruvylshikimate-3-phosphate (EPSP) to yield chorismate, which is the branch point compound that serves as the starting substrate for the three terminal pathways of aromatic amino acid biosynthesis. This reaction introduces a second double bond into the aromatic ring system. The chain is Chorismate synthase from Dechloromonas aromatica (strain RCB).